We begin with the raw amino-acid sequence, 79 residues long: Delta-hormotoxin-Cpt1a (79 aa).

An N-terminal signal peptide occupies residues 1-20; sequence MKTQVLAVFVLCVLFCLAES. Positions 21–31 are excised as a propeptide; the sequence is RTTLNKRIDIA. Cystine bridges form between Cys36-Cys75, Cys38-Cys66, and Cys56-Cys76.

It belongs to the sea anemone sodium channel inhibitory toxin family.

Its subcellular location is the secreted. It localises to the nematocyst. In neuromuscular preparation of crustaceans, the toxin increased neurotransmitter release, causing repetitive firing of the axons. May affect sodium channels (Nav). The chain is Delta-hormotoxin-Cpt1a from Calliactis parasitica (Sea anemone).